Here is a 501-residue protein sequence, read N- to C-terminus: Serine/threonine-protein kinase pelle (501 aa).

The interval 1 to 25 (MSGVQTAEAEAQAQNQANGNRTRSR) is disordered. The span at 7–18 (AEAEAQAQNQAN) shows a compositional bias: low complexity. Residues 55-121 (WQQLATAVKL…NAMRLIKDYV (67 aa)) enclose the Death domain. The segment at 144 to 176 (DSSAKVNNGPPFPSSSGVSNSNNNRTSTTATEE) is disordered. The span at 149-167 (VNNGPPFPSSSGVSNSNNN) shows a compositional bias: low complexity. In terms of domain architecture, Protein kinase spans 213–499 (WSPDNRLGQG…AVLKRFEPFV (287 aa)). ATP contacts are provided by residues 219 to 227 (LGQGGFGDV) and Lys-240. Residue Asp-346 is the Proton acceptor of the active site. Residues 348 to 351 (KPAN) and Asp-364 each bind ATP.

The protein belongs to the protein kinase superfamily. TKL Ser/Thr protein kinase family. Pelle subfamily. Interacts (via Death domain) with tub (via Death domain). Interacts with Pellino (Pli).

The protein resides in the cell membrane. The protein localises to the cytoplasm. It carries out the reaction L-seryl-[protein] + ATP = O-phospho-L-seryl-[protein] + ADP + H(+). The catalysed reaction is L-threonyl-[protein] + ATP = O-phospho-L-threonyl-[protein] + ADP + H(+). In terms of biological role, plays an essential role in the Tl receptor signaling pathway that establishes embryonic dorsoventral polarity; the signal directs import of dl into ventral and ventrolateral nuclei, thereby establishing dorsoventral polarity. Tub recruits pll to the plasma membrane and protein-protein interaction activates pll. The chain is Serine/threonine-protein kinase pelle (pll) from Drosophila melanogaster (Fruit fly).